The sequence spans 386 residues: Coproporphyrinogen-III oxidase 1, chloroplastic (386 aa).

The transit peptide at 1 to 48 (MASHSSTLLSSPTFAPFSSHRLHYSPNPSTLRFSRPIRNKPNLALRCS) directs the protein to the chloroplast. Residues 125-134 (VLQDGNVFEK) form an important for dimerization region. Ser-174 contributes to the substrate binding site. His-188 serves as the catalytic Proton donor. Substrate-binding positions include 190–192 (NYR) and 344–349 (GGRIES). The interval 326–361 (YVEFNLVYDRGTTFGLKTGGRIESILVSLPLSARWE) is important for dimerization.

It belongs to the aerobic coproporphyrinogen-III oxidase family. Homodimer. Expressed in cotyledons, leaves and roots.

The protein resides in the plastid. It localises to the chloroplast. The catalysed reaction is coproporphyrinogen III + O2 + 2 H(+) = protoporphyrinogen IX + 2 CO2 + 2 H2O. Its pathway is porphyrin-containing compound metabolism; protoporphyrin-IX biosynthesis; protoporphyrinogen-IX from coproporphyrinogen-III (O2 route): step 1/1. The protein operates within porphyrin-containing compound metabolism; chlorophyll biosynthesis. Functionally, key enzyme in heme biosynthesis. Catalyzes the oxidative decarboxylation of propionic acid side chains of rings A and B of coproporphyrinogen III. In Arabidopsis thaliana (Mouse-ear cress), this protein is Coproporphyrinogen-III oxidase 1, chloroplastic (CPX1).